Reading from the N-terminus, the 378-residue chain is Forkhead box protein I1 (378 aa).

Disordered regions lie at residues 1 to 26 and 208 to 278; these read MSSF…QEPP and DNGN…APCL. The fork-head DNA-binding region spans 123-217; that stretch reads RPPYSYSALI…DNGNFRRKRK (95 aa). Polar residues predominate over residues 236 to 248; that stretch reads SSLPVDSPKTTEP.

In terms of tissue distribution, expressed in kidney.

The protein localises to the nucleus. Functionally, transcriptional activator required for the development of normal hearing, sense of balance and kidney function. Required for the expression of SLC26A4/PDS, JAG1 and COCH in a subset of epithelial cells and the development of the endolymphatic system in the inner ear. Also required for the expression of SLC4A1/AE1, SLC4A9/AE4, ATP6V1B1 and the differentiation of intercalated cells in the epithelium of distal renal tubules. In Homo sapiens (Human), this protein is Forkhead box protein I1 (FOXI1).